Reading from the N-terminus, the 355-residue chain is Probable butyrate kinase (355 aa).

The protein belongs to the acetokinase family.

The protein resides in the cytoplasm. It carries out the reaction butanoate + ATP = butanoyl phosphate + ADP. The chain is Probable butyrate kinase from Listeria monocytogenes serotype 4b (strain CLIP80459).